The sequence spans 264 residues: Caffeoyl-CoA O-methyltransferase 2 (264 aa).

The span at 1–20 shows a compositional bias: low complexity; the sequence is MATTATEATKTTAPAQEQQA. Residues 1-37 form a disordered region; sequence MATTATEATKTTAPAQEQQANGNGNGEQKTRHSEVGH. Basic and acidic residues predominate over residues 28 to 37; sequence QKTRHSEVGH. Lys-38 serves as a coordination point for substrate. Residues Thr-80, Glu-102, 104–105, Ser-110, Asp-128, and Ala-157 each bind S-adenosyl-L-methionine; that span reads GV. Asp-180 is a binding site for substrate. Position 180 (Asp-180) interacts with a divalent metal cation. Asp-182 lines the S-adenosyl-L-methionine pocket. Positions 206 and 207 each coordinate a divalent metal cation. Asn-211 is a binding site for substrate.

The protein belongs to the class I-like SAM-binding methyltransferase superfamily. Cation-dependent O-methyltransferase family. CCoAMT subfamily. A divalent metal cation is required as a cofactor.

It catalyses the reaction (E)-caffeoyl-CoA + S-adenosyl-L-methionine = (E)-feruloyl-CoA + S-adenosyl-L-homocysteine + H(+). It functions in the pathway aromatic compound metabolism; phenylpropanoid biosynthesis. In terms of biological role, methylates caffeoyl-CoA to feruloyl-CoA and 5-hydroxyferuloyl-CoA to sinapoyl-CoA. Plays a role in the synthesis of feruloylated polysaccharides. Involved in the reinforcement of the plant cell wall. Also involved in the responding to wounding or pathogen challenge by the increased formation of cell wall-bound ferulic acid polymers. This Zea mays (Maize) protein is Caffeoyl-CoA O-methyltransferase 2 (CCOAOMT2).